Consider the following 2223-residue polypeptide: MAPKKEKGGTVNTSSKIWEPSLIAAQFNQNDWQASIAFVVGNQIEDDLLIQALTVAVQVPQRKLFSMVSWQDILQQINEINTLVGSASSKKAKKPVGGNAPLYYEVLTAAKAIMDSGEKLTLPLIGKLLKFQLLQIKFKDQQRRENEKKVIEDKPKLEKDKGKAKSPKEKKAPSAKPAKGKGKDQPEANAPVKKTTQLKRRGEDDHTNRYIDDEPDDGAQHYIIVVGFNNPQLLAIMAELGIPITSVIKISSENYEPLQTHLAAVNQQQEVLLQSEDLEAEKLKKENAIKELKTFWKYLEPVLNNEKPETNLFDVARLEYMVKAADFPSDWSDGEMMLKLGTDIFENIACLMYDILDWKRQHQHYLESMQLINVPQVVNEKPVLEAMPTSEAPQPAVPAPGKKKAQYEEPQAPPPVTSVITTEVDMRYYNYLLNPIREEFISVPLILHCMLEQVVATEEDLVPPSLREPSPRADGLDHRIAAHIVSLLPSLCLSEREKKNLHDIFLSEEENESKAVPKGPLLLNYHDAHAHKKYALQDQKNFDPVQIEQEMQSKLPLWEFLQFPLPPPWNNTKRLATIHELMHFCTSDVLSWNEVERAFKVFTFESLKLSEVDEKGKLKPSGMMCGSDSEMFNIPWDNPARFAKQIRQQYVMKMNTQEAKQKADIKIKDRTLFVDQNLSMSVQDNESNREPSDPSQCDANNMKHSDLNNLKLSVPDNRQLLEQESIMKAQPQHESLEQTTNNEIKDDAVTKADSHEKKPKKMMVEADLEDIKKTQQRSLMDWSFTEHFKPKVLLQVLQEAHKQYRCVDSYYHTQDNSLLLVFHNPMNRQRLHCEYWNIALHSNVGFRNYLELVAKSIQDWITKEEAIYQESKMNEKIIRTRAELELKSSANAKLTSASKIFSIKESKSNKGISKTEISDQEKEKEKEKIPFILEGSLKAWKEEQHRLAEEERLREEKKAEKKGKEAGKKKGKDNAEKEDSRSLKKKSPYKEKSKEEQVKIQEVTEESPHQPEPKITYPFHGYNMGNIPTQISGSNYYLYPSDGGQIEVEKTMFEKGPTFIKVRVVKDNHNFMIHLNDPKEIVKKEEKGDYYLEEEEEGDEEQSLETEVSDAKNKAFSKFGSFSATLENGICLSISYYGSNGMAPEDKDPDLETILNIPSALTPTVVPVIVTVPQSKAKGKIKGKEKPKESLKEEEHPKEEEKKEEEVEPEPVLQETLDVPTFQSLNVSCPSGLLLTFIGQESTGQYVIDEEPTWDIMVRQSYPQRVKHYEFYKTVMPPAEQEASRVITSQGTVVKYMLDGSTQILFADGAVSRSPNSGLICPPSEMPATPHSGDLMDSISQQKSETIPSEITNTKKGKSHKSQSSMAHKGEIHDPPPEAVQTVTPVEVHIGTWFTTTPEGNRIGTKGLERIADLTPLLSFQATDPVNGTVMTTREDKVVIVERKDGTRIVDHADGTRITTFYQVYEDQIILPDDQETTEGPRTVTRQVKCMRVESSRYATVIANCEDSSCCATFGDGTTIIAKPQGTYQVLPPNTGSLYIDKDCSAVYCHESSSNIYYPFQKREQLRAGRYIMRHTSEVICEVLDPEGNTFQVMADGSISTILPEKKLEDDLNEKTEGYDSLSSMHLEKNHQQIYGEHVPRFFVMYADGSGMELLRDSDIEEYLSLAYKESNTVVLQEPVQEQPGTLTITVLRPFHEASPWQVKKEDTIVPPNLRSRSWETFPSVEKKTPGPPFGTQIWKGLCIESKQLVSAPGAILKSPSVLQMRQFIQHEVIKNEVKLRLQVSLKDYINYILKKEDELQEMMVKDSRTEEERGNAADLLKLVMSFPKMEETTKSHVTEVAAHLTDLFKQSLATPPKCPPDTFGKDFFEKTWRHTASSKRWKEKIDKTRKEIETTQNYLMDIKNRIIPPFFKSELNQLYQSQYNHLDSLSKKLPSFTKKNEDANETAVQDTSDLNLDFKPHKVSEQKSSSVPSLPKPEISADKKDFTAQNQTENLTKSPEEAESYEPVKIPTQSLLQDVAGQTRKEKVKLPHYLLSSKPKSQPLAKVQDSVGGKVNTSSVASAAINNAKSSLFGFHLLPSSVKFGVLKEGHTYATVVKLKNVGVDFCRFKVKQPPPSTGLKVTYKPGPVAAGMQTELNIELFATAVGEDGAKGSAHISHNIEIMTEHEVLFLPVEATVLTSSNYDKRPKDFPQGKENPMVQRTSTIYSSTLGVFMSRKVSPH.

Basic and acidic residues-rich tracts occupy residues 144 to 172 (RENEKKVIEDKPKLEKDKGKAKSPKEKKA) and 200 to 212 (RRGEDDHTNRYID). A disordered region spans residues 144–214 (RENEKKVIED…DHTNRYIDDE (71 aa)). The stretch at 266–295 (NQQQEVLLQSEDLEAEKLKKENAIKELKTF) forms a coiled coil. 6 disordered regions span residues 387–416 (MPTSEAPQPAVPAPGKKKAQYEEPQAPPPV), 680–710 (MSVQDNESNREPSDPSQCDANNMKHSDLNNL), 731–762 (PQHESLEQTTNNEIKDDAVTKADSHEKKPKKM), 950–1015 (EERL…EPKI), 1179–1212 (GKIKGKEKPKESLKEEEHPKEEEKKEEEVEPEPV), and 1345–1378 (ETIPSEITNTKKGKSHKSQSSMAHKGEIHDPPPE). Basic and acidic residues-rich tracts occupy residues 743 to 756 (EIKDDAVTKADSHE), 950 to 999 (EERL…EQVK), and 1182 to 1205 (KGKEKPKESLKEEEHPKEEEKKEE). A coiled-coil region spans residues 940 to 966 (WKEEQHRLAEEERLREEKKAEKKGKEA). Over residues 1345–1354 (ETIPSEITNT) the composition is skewed to polar residues. The stretch at 1874–1907 (RHTASSKRWKEKIDKTRKEIETTQNYLMDIKNRI) forms a coiled coil. Disordered stretches follow at residues 1938 to 1957 (TKKNEDANETAVQDTSDLNL) and 1962 to 2008 (HKVS…SYEP). The segment covering 1988–1998 (TAQNQTENLTK) has biased composition (polar residues).

Interacts (via the C-terminus) with SPAG6; the interaction probably occurs on polymerized microtubules. In terms of tissue distribution, highly expressed in testis. Expressed in organs that contain cilia-bearing cells including brain, oviduct, lung, and uterus.

It is found in the cytoplasm. The protein localises to the cytoskeleton. Its subcellular location is the flagellum axoneme. It localises to the cytoplasmic vesicle. The protein resides in the secretory vesicle. It is found in the acrosome. The protein localises to the golgi apparatus. Component of the central pair apparatus of ciliary axonemes. Plays a critical role in the function and structure of motile cilia. May play a role in endochondral bone formation, most likely because of a function in primary cilia of chondrocytes and osteoblasts. Essential for normal spermatogenesis and male fertility. Required for normal manchette structure, transport of proteins along the manchette microtubules and formation of the sperm head and flagellum. Essential for sperm flagellum development and proper assembly of the respiratory motile cilia central pair apparatus, but not the brain ependymal cilia. The sequence is that of Sperm-associated antigen 17 (SPAG17) from Homo sapiens (Human).